The sequence spans 353 residues: Fasciclin-like arabinogalactan protein 21 (353 aa).

The N-terminal stretch at 1–28 is a signal peptide; it reads MGCCSSDCFVYFILSIALAFMAISTTLR. N-linked (GlcNAc...) asparagine glycosylation is found at Asn-51, Asn-81, Asn-94, Asn-200, Asn-249, and Asn-315. In terms of domain architecture, FAS1 1 spans 83–181; the sequence is TLFAIEDASF…HGVIGPFSPL (99 aa). Residues 254–352 form the FAS1 2 domain; it reads TILATPNLVS…GISHTLEIPH (99 aa).

Belongs to the fasciclin-like AGP family.

Its subcellular location is the secreted. Functionally, may be a cell surface adhesion protein. This is Fasciclin-like arabinogalactan protein 21 (FLA21) from Arabidopsis thaliana (Mouse-ear cress).